The sequence spans 971 residues: Protein ALWAYS EARLY 1 (971 aa).

Positions 1–11 (MAPTRKSKSVN) are enriched in basic residues. 5 disordered regions span residues 1-40 (MAPT…LADK), 117-137 (SESE…LKRK), 197-260 (IEDF…MFEN), 326-371 (GLLE…GLED), and 421-507 (PKES…KISL). The region spanning 40 to 98 (KLGPQWTKRELVRFYDAYRKYVGDWKKVAAAVRNNRSVEMVETLFCMNRAYLSLPEGTA) is the SANT domain. 3 stretches are compositionally biased toward basic and acidic residues: residues 209–219 (KQLDADDDASR), 332–350 (SSPH…KKSN), and 424–440 (STQD…EVDS). The span at 450–470 (SSQGPAKQLKTAKTTVESSSA) shows a compositional bias: polar residues.

In terms of tissue distribution, expressed ubiquitously in vegetative and reproductive tissues.

It localises to the nucleus. The sequence is that of Protein ALWAYS EARLY 1 (ALY1) from Arabidopsis thaliana (Mouse-ear cress).